The primary structure comprises 388 residues: Processive diacylglycerol beta-glucosyltransferase (388 aa).

The protein belongs to the glycosyltransferase 28 family. UgtP subfamily.

The protein localises to the cell membrane. It catalyses the reaction a 1,2-diacyl-3-O-(beta-D-glucopyranosyl)-sn-glycerol + UDP-alpha-D-glucose = a 1,2-diacyl-3-O-(beta-D-Glc-(1-&gt;6)-beta-D-Glc)-sn-glycerol + UDP + H(+). It carries out the reaction a 1,2-diacyl-3-O-(beta-D-Glc-(1-&gt;6)-beta-D-Glc)-sn-glycerol + UDP-alpha-D-glucose = a 1,2-diacyl-3-O-(beta-D-Glc-(1-&gt;6)-beta-D-Glc-(1-&gt;6)-beta-D-Glc)-sn-glycerol + UDP + H(+). The catalysed reaction is a 1,2-diacyl-sn-glycerol + UDP-alpha-D-glucose = a 1,2-diacyl-3-O-(beta-D-glucopyranosyl)-sn-glycerol + UDP + H(+). Its pathway is glycolipid metabolism; diglucosyl-diacylglycerol biosynthesis. In terms of biological role, processive glucosyltransferase involved in the biosynthesis of both the bilayer- and non-bilayer-forming membrane glucolipids. Is able to successively transfer up to three glucosyl residues to diacylglycerol (DAG), thereby catalyzing the formation of beta-monoglucosyl-DAG (3-O-(beta-D-glucopyranosyl)-1,2-diacyl-sn-glycerol), beta-diglucosyl-DAG (3-O-(beta-D-glucopyranosyl-beta-(1-&gt;6)-D-glucopyranosyl)-1,2-diacyl-sn-glycerol) and beta-triglucosyl-DAG (3-O-(beta-D-glucopyranosyl-beta-(1-&gt;6)-D-glucopyranosyl-beta-(1-&gt;6)-D-glucopyranosyl)-1,2-diacyl-sn-glycerol). Beta-diglucosyl-DAG is the predominant glycolipid found in Bacillales and is also used as a membrane anchor for lipoteichoic acid (LTA). This chain is Processive diacylglycerol beta-glucosyltransferase, found in Bacillus cytotoxicus (strain DSM 22905 / CIP 110041 / 391-98 / NVH 391-98).